The following is a 1042-amino-acid chain: Ubiquitin carboxyl-terminal hydrolase 38 (1042 aa).

The USP domain occupies 445-949; sequence TGLINLGNTC…TAYVLLYKKQ (505 aa). The active-site Nucleophile is C454. The active-site Proton acceptor is the H857.

It belongs to the peptidase C19 family. As to quaternary structure, interacts with isoform 1 of FBXW7; this interaction prevents FBXW7-mediated degradation of MYC.

It localises to the cytoplasm. Its subcellular location is the nucleus. It catalyses the reaction Thiol-dependent hydrolysis of ester, thioester, amide, peptide and isopeptide bonds formed by the C-terminal Gly of ubiquitin (a 76-residue protein attached to proteins as an intracellular targeting signal).. Deubiquitinating enzyme that plays a role in various cellular processes, including DNA repair, cell cycle regulation, and immune response. Plays a role in the inhibition of type I interferon signaling by mediating the 'Lys-33' to 'Lys-48' ubiquitination transition of TBK1 leading to its degradation. Cleaves the ubiquitin chain from the histone demethylase LSD1/KDM1A and prevents it from degradation by the 26S proteasome, thus maintaining LSD1 protein level in cells. Plays a role in the DNA damage response by regulating the deacetylase activity of HDAC1. Mechanistically, removes the 'Lys-63'-linked ubiquitin chain promoting the deacetylase activity of HDAC1 in response to DNA damage. Also acts as a specific deubiquitinase of histone deacetylase 3/HDAC3 and cleaves its 'Lys-63'-linked ubiquitin chains to lower its histone deacetylase activity. Regulates MYC levels and cell proliferation via antagonizing ubiquitin E3 ligase FBXW7 thereby preventing MYC 'Lys-48'-linked ubiquitination and degradation. Participates in antiviral response by removing both 'Lys-48'-linked and 'Lys-63'-linked polyubiquitination of Zika virus envelope protein E. Constitutively associated with IL-33R/IL1RL1, deconjugates its 'Lys-27'-linked polyubiquitination resulting in its autophagic degradation. The chain is Ubiquitin carboxyl-terminal hydrolase 38 (Usp38) from Mus musculus (Mouse).